The following is a 362-amino-acid chain: Chorismate synthase (362 aa).

Residues R48 and R54 each coordinate NADP(+). FMN is bound by residues 125-127 (RSS), 238-239 (NA), G278, 293-297 (KPTSS), and R319.

Belongs to the chorismate synthase family. In terms of assembly, homotetramer. FMNH2 is required as a cofactor.

The enzyme catalyses 5-O-(1-carboxyvinyl)-3-phosphoshikimate = chorismate + phosphate. Its pathway is metabolic intermediate biosynthesis; chorismate biosynthesis; chorismate from D-erythrose 4-phosphate and phosphoenolpyruvate: step 7/7. Functionally, catalyzes the anti-1,4-elimination of the C-3 phosphate and the C-6 proR hydrogen from 5-enolpyruvylshikimate-3-phosphate (EPSP) to yield chorismate, which is the branch point compound that serves as the starting substrate for the three terminal pathways of aromatic amino acid biosynthesis. This reaction introduces a second double bond into the aromatic ring system. The polypeptide is Chorismate synthase (Tolumonas auensis (strain DSM 9187 / NBRC 110442 / TA 4)).